We begin with the raw amino-acid sequence, 529 residues long: Potassium voltage-gated channel subfamily A member 6 (529 aa).

Positions 1-35 (MRSEKSLTLAAPGEVRGPEGEQQDAGEFQEAEGGG) are disordered. The Cytoplasmic portion of the chain corresponds to 1–171 (MRSEKSLTLA…LLFEYPESSG (171 aa)). Serine 3 bears the Phosphoserine mark. The segment covering 21 to 30 (EQQDAGEFQE) has biased composition (acidic residues). Residues 172-193 (PARGIAIVSVLVILISIVIFCL) form a helical membrane-spanning segment. Over 194–262 (ETLPQFRADG…TLGGSFFTDP (69 aa)) the chain is Extracellular. The segment at 203–238 (GRGGSNEGSGTRLSPASRSHEEEDEDEDSYAFPGSI) is disordered. Polar residues predominate over residues 210–219 (GSGTRLSPAS). Residues 263-284 (FFLVETLCIVWFTFELLVRFSA) traverse the membrane as a helical segment. A lipid anchor (S-palmitoyl cysteine) is attached at cysteine 285. The Cytoplasmic portion of the chain corresponds to 285–295 (CPSKAAFFRNI). The helical transmembrane segment at 296–316 (MNIIDLVAIFPYFITLGTELV) threads the bilayer. Topologically, residues 317–337 (QRHEQQSVSGGSGQNGQQAMS) are extracellular. Residues 338–358 (LAILRVIRLVRVFRIFKLSRH) traverse the membrane as a helical; Voltage-sensor segment. Topologically, residues 359–373 (SKGLQILGKTLQASM) are cytoplasmic. The interval 360–373 (KGLQILGKTLQASM) is S4-S5 linker. A helical transmembrane segment spans residues 374-395 (RELGLLIFFLFIGVILFSSAVY). Over 396–409 (FAEADDVDSLFPSI) the chain is Extracellular. Positions 410–421 (PDAFWWAVVTMT) form an intramembrane region, helical. A Selectivity filter motif is present at residues 422–427 (TVGYGD). An intramembrane segment occupies 422–429 (TVGYGDMY). The Extracellular segment spans residues 430 to 436 (PMTVGGK). A helical membrane pass occupies residues 437–465 (IVGSLCAIAGVLTIALPVPVIVSNFNYFY). The Cytoplasmic segment spans residues 466 to 529 (HRETEQEEQG…YAEKRMLTEV (64 aa)). Positions 488–513 (DLKATDNGLGKPDFAEASRERRPSYL) are disordered. The span at 500–510 (DFAEASRERRP) shows a compositional bias: basic and acidic residues. Serine 511 is subject to Phosphoserine; by PKA. A PDZ-binding motif is present at residues 527 to 529 (TEV).

The protein belongs to the potassium channel family. A (Shaker) (TC 1.A.1.2) subfamily. Kv1.6/KCNA6 sub-subfamily. As to quaternary structure, homotetramer and heterotetramer of potassium channel proteins. Interacts with KCNAB1 and KCNAB2.

The protein resides in the cell membrane. It carries out the reaction K(+)(in) = K(+)(out). Its function is as follows. Voltage-gated potassium channel that mediates transmembrane potassium transport in excitable membranes. Forms tetrameric potassium-selective channels through which potassium ions pass in accordance with their electrochemical gradient. The channel alternates between opened and closed conformations in response to the voltage difference across the membrane. Can form functional homotetrameric channels and heterotetrameric channels that contain variable proportions of KCNA1, KCNA2, KCNA4, KCNA6, and possibly other family members as well; channel properties depend on the type of alpha subunits that are part of the channel. Channel properties are modulated by cytoplasmic beta subunits that regulate the subcellular location of the alpha subunits and promote rapid inactivation. Homotetrameric channels display rapid activation and slow inactivation. The polypeptide is Potassium voltage-gated channel subfamily A member 6 (Kcna6) (Mus musculus (Mouse)).